An 809-amino-acid polypeptide reads, in one-letter code: Bifunctional enzyme MurC/Ddl (809 aa).

A UDP-N-acetylmuramate--alanine ligase region spans residues 1 to 450; it reads MKGTPQYHFI…GEALKDFNPK (450 aa). ATP is bound by residues 111–117 and 606–661; these read GSHGKTG and IETF…SREI. The segment at 451-809 is D-alanine--D-alanine ligase; sequence KLSIGLVCGG…FTKEQDLVKR (359 aa). Residues 573-784 form the ATP-grasp domain; it reads KRIASAVGVP…QEQIVDHFII (212 aa). Residues Asp738, Glu751, and Asn753 each contribute to the Mg(2+) site.

The protein in the N-terminal section; belongs to the MurCDEF family. It in the C-terminal section; belongs to the D-alanine--D-alanine ligase family. The cofactor is Mg(2+). Mn(2+) serves as cofactor.

Its subcellular location is the cytoplasm. It carries out the reaction UDP-N-acetyl-alpha-D-muramate + L-alanine + ATP = UDP-N-acetyl-alpha-D-muramoyl-L-alanine + ADP + phosphate + H(+). The enzyme catalyses 2 D-alanine + ATP = D-alanyl-D-alanine + ADP + phosphate + H(+). The protein operates within cell wall biogenesis; peptidoglycan biosynthesis. Cell wall formation. This is Bifunctional enzyme MurC/Ddl (murC/ddl) from Chlamydia pneumoniae (Chlamydophila pneumoniae).